The sequence spans 170 residues: Dual-action ribosomal maturation protein DarP (170 aa).

This sequence belongs to the DarP family.

The protein resides in the cytoplasm. Member of a network of 50S ribosomal subunit biogenesis factors which assembles along the 30S-50S interface, preventing incorrect 23S rRNA structures from forming. Promotes peptidyl transferase center (PTC) maturation. The protein is Dual-action ribosomal maturation protein DarP of Neisseria meningitidis serogroup A / serotype 4A (strain DSM 15465 / Z2491).